We begin with the raw amino-acid sequence, 613 residues long: pH-response transcription factor pacC/RIM101 (613 aa).

Residues 1-61 (MSPSAPEQKP…SSTAPSTSSD (61 aa)) form a disordered region. Positions 11 to 60 (QLQQQQQQQQQGSSSGDSSSGSVNDSKSVTPAPSATSSTSQSSTAPSTSS) are enriched in low complexity. 3 consecutive C2H2-type zinc fingers follow at residues 64–89 (LICR…CERH), 100–124 (LTCQ…IRVH), and 130–152 (HKCE…VKTH). Residues 146-157 (KKHVKTHADDSV) show a composition bias toward basic and acidic residues. Disordered regions lie at residues 146–186 (KKHV…YDHT), 371–391 (NTPS…GADG), 406–535 (AISS…ATRE), and 565–613 (EFVE…MPGA). Low complexity predominate over residues 417 to 441 (PPSSSMSYTSGHSPSPSSSAMSPQS). Polar residues-rich tracts occupy residues 442 to 460 (RHGS…SLPA) and 506 to 517 (SGASTPKASESA). The short motif at 451 to 454 (YPTL) is the YPX[LI] motif 1 element. The YPX[LI] motif 2 motif lies at 605–608 (YPIL).

This sequence belongs to the pacC/RIM101 family. As to quaternary structure, binds to DNA. In terms of processing, activated by C-terminal proteolytic cleavage by signaling protease (probably palB/RIM13) at neutral to alkaline ambient pH.

The protein localises to the cytoplasm. It is found in the nucleus. Its function is as follows. Transcription factor that mediates regulation of both acid- and alkaline-expressed genes in response to ambient pH. At alkaline ambient pH, activates transcription of alkaline-expressed genes (including PAC1 itself) and represses transcription of acid-expressed genes. The protein is pH-response transcription factor pacC/RIM101 (PAC1) of Gibberella moniliformis (Maize ear and stalk rot fungus).